The sequence spans 162 residues: Caveolin-2 (162 aa).

The Cytoplasmic segment spans residues 1–86 (MGLETEKTDV…FEISKYVMYK (86 aa)). Phosphotyrosine; by SRC is present on Y19. S20 and S23 each carry phosphoserine. Y27 is subject to Phosphotyrosine; by SRC. The residue at position 36 (S36) is a Phosphoserine. Residues 87–107 (FLTVFLAIPLAFLAGILFATL) constitute an intramembrane region (helical). The Cytoplasmic portion of the chain corresponds to 108-162 (SCLHIWIIMPFVKTCLMVLPSVQTIWKSVTDAIVAPLCTSIGRSFSSVSLQLSQD).

Belongs to the caveolin family. In terms of assembly, monomer or homodimer. Interacts with CAV1; the interaction forms a stable heterooligomeric complex that is required for targeting to lipid rafts and for caveolae formation. Tyrosine phosphorylated forms do not form heterooligomers with the Tyr-19-phosphorylated form existing as a monomer or dimer, and the Tyr-27-form as a monomer only. Interacts (tyrosine phosphorylated form) with the SH2 domain-containing proteins, RASA1, NCK1 and SRC. Interacts (tyrosine phosphorylated form) with INSR, the interaction (Tyr-27-phosphorylated form) is increased on insulin stimulation. Interacts (Tyr-19 phosphorylated form) with MAPK1 (phosphorylated form); the interaction, promoted by insulin, leads to nuclear location and MAPK1 activation. Interacts with STAT3; the interaction is increased on insulin-induced tyrosine phosphorylation leading to STAT activation. Phosphorylated on serine and tyrosine residues. CAV1 promotes phosphorylation on Ser-23 which then targets the complex to the plasma membrane, lipid rafts and caveolae. Phosphorylation on Ser-36 appears to modulate mitosis in endothelial cells. Phosphorylation on both Tyr-19 and Tyr-27 is required for insulin-induced 'Ser-727' phosphorylation of STAT3 and its activation. Phosphorylation on Tyr-19 is required for insulin-induced phosphorylation of MAPK1 and DNA binding of STAT3. Tyrosine phosphorylation is induced by both EGF and insulin (By. similarity).

It is found in the nucleus. The protein localises to the cytoplasm. It localises to the golgi apparatus membrane. The protein resides in the cell membrane. Its subcellular location is the membrane. It is found in the caveola. May act as a scaffolding protein within caveolar membranes. Interacts directly with G-protein alpha subunits and can functionally regulate their activity. Acts as an accessory protein in conjunction with CAV1 in targeting to lipid rafts and driving caveolae formation. The Ser-36 phosphorylated form has a role in modulating mitosis in endothelial cells. Positive regulator of cellular mitogenesis of the MAPK signaling pathway. Required for the insulin-stimulated nuclear translocation and activation of MAPK1 and STAT3, and the subsequent regulation of cell cycle progression. This chain is Caveolin-2 (CAV2), found in Aotus nancymaae (Ma's night monkey).